The following is a 500-amino-acid chain: Nitrate/nitrite transporter NrtP (500 aa).

The next 12 membrane-spanning stretches (helical) occupy residues Trp19–Ile39, Thr52–Leu72, Ile79–Gln99, Leu109–Phe129, Phe147–Ser167, Leu175–Val195, Ser220–Trp240, Ile247–Ala267, Trp364–Asn384, Ile389–Ala409, Ile425–Ser445, and Thr451–Leu471.

Belongs to the major facilitator superfamily. Nitrate/nitrite porter (TC 2.A.1.8) family.

The protein resides in the cell inner membrane. Transport system for both nitrate and nitrite, with much higher affinity for nitrate than for nitrite. This chain is Nitrate/nitrite transporter NrtP, found in Nostoc punctiforme (strain ATCC 29133 / PCC 73102).